A 145-amino-acid chain; its full sequence is uncharacterized protein (145 aa).

A run of 3 helical transmembrane segments spans residues 3–23, 83–103, and 105–125; these read VGII…GIGG, YVID…YLVP, and LSLL…MLWI.

It localises to the cell membrane. This is an uncharacterized protein from Methanocaldococcus jannaschii (strain ATCC 43067 / DSM 2661 / JAL-1 / JCM 10045 / NBRC 100440) (Methanococcus jannaschii).